A 387-amino-acid polypeptide reads, in one-letter code: tRNA-specific 2-thiouridylase MnmA (387 aa).

ATP is bound by residues 34 to 41 (AMSGGVDS) and methionine 60. Cysteine 127 functions as the Nucleophile in the catalytic mechanism. Cysteines 127 and 223 form a disulfide. ATP is bound at residue glycine 151. Positions 173–175 (KDQ) are interaction with tRNA. The active-site Cysteine persulfide intermediate is the cysteine 223.

The protein belongs to the MnmA/TRMU family.

The protein localises to the cytoplasm. It carries out the reaction S-sulfanyl-L-cysteinyl-[protein] + uridine(34) in tRNA + AH2 + ATP = 2-thiouridine(34) in tRNA + L-cysteinyl-[protein] + A + AMP + diphosphate + H(+). Functionally, catalyzes the 2-thiolation of uridine at the wobble position (U34) of tRNA, leading to the formation of s(2)U34. The protein is tRNA-specific 2-thiouridylase MnmA of Anaplasma marginale (strain St. Maries).